A 154-amino-acid chain; its full sequence is Transcriptional repressor NrdR (154 aa).

The segment at 3-34 is a zinc-finger region; it reads CPFCGNVDTQVKDSRPAEDNVAIRRRRFCPAC. The ATP-cone domain occupies 49–139; that stretch reads LVVVKSSGRR…VYKNFQAADD (91 aa).

The protein belongs to the NrdR family. The cofactor is Zn(2+).

Negatively regulates transcription of bacterial ribonucleotide reductase nrd genes and operons by binding to NrdR-boxes. The sequence is that of Transcriptional repressor NrdR from Paracoccus denitrificans (strain Pd 1222).